The sequence spans 236 residues: Small ribosomal subunit protein uS3 (236 aa).

The KH type-2 domain occupies 39 to 107 (VRQFLTKELK…PAQINISEVR (69 aa)).

The protein belongs to the universal ribosomal protein uS3 family. As to quaternary structure, part of the 30S ribosomal subunit. Forms a tight complex with proteins S10 and S14.

Binds the lower part of the 30S subunit head. Binds mRNA in the 70S ribosome, positioning it for translation. In Aeromonas salmonicida (strain A449), this protein is Small ribosomal subunit protein uS3.